A 634-amino-acid polypeptide reads, in one-letter code: Extracellular metalloproteinase MEP (634 aa).

A signal peptide spans 1 to 18 (MRGLLLAGALALPASVFA). Residues 19 to 245 (HPAHQSYGLN…IHGVVDYVAE (227 aa)) constitute a propeptide that is removed on maturation. Zn(2+) is bound at residue histidine 429. Residue glutamate 430 is part of the active site. Position 433 (histidine 433) interacts with Zn(2+).

It belongs to the peptidase M36 family. It depends on Zn(2+) as a cofactor.

The protein localises to the secreted. Functionally, secreted metalloproteinase that allows assimilation of proteinaceous substrates and probably acts as a virulence factor. The sequence is that of Extracellular metalloproteinase MEP (MEP) from Neosartorya fischeri (strain ATCC 1020 / DSM 3700 / CBS 544.65 / FGSC A1164 / JCM 1740 / NRRL 181 / WB 181) (Aspergillus fischerianus).